A 265-amino-acid polypeptide reads, in one-letter code: tRNA (guanine-N(7)-)-methyltransferase (265 aa).

S-adenosyl-L-methionine-binding residues include E96, E121, D148, and D170. The active site involves D170. Residues K174 and D206 each contribute to the substrate site.

Belongs to the class I-like SAM-binding methyltransferase superfamily. TrmB family.

It carries out the reaction guanosine(46) in tRNA + S-adenosyl-L-methionine = N(7)-methylguanosine(46) in tRNA + S-adenosyl-L-homocysteine. Its pathway is tRNA modification; N(7)-methylguanine-tRNA biosynthesis. In terms of biological role, catalyzes the formation of N(7)-methylguanine at position 46 (m7G46) in tRNA. The polypeptide is tRNA (guanine-N(7)-)-methyltransferase (Rhodopseudomonas palustris (strain ATCC BAA-98 / CGA009)).